The sequence spans 908 residues: Transferrin-binding protein A (908 aa).

Residues Met1–Ala24 form the signal peptide. The short motif at Asp38 to Lys45 is the TonB box element. Positions Arg51–Lys176 constitute a TBDR plug domain. Positions Gln187–Phe908 constitute a TBDR beta-barrel domain. The short motif at Asn891 to Phe908 is the TonB C-terminal box element.

Belongs to the TonB-dependent receptor family. In terms of assembly, binds both human apo- and holo-transferrin (TF), via the TF C-terminus. Forms a large complex with TF and TbpB.

The protein resides in the cell outer membrane. Neisseria acquires iron by extracting it from serum transferrin (TF) in its human host. Acts as a TF receptor and is required for TF utilization. Binds both apo- and holo-TF, via the TF C-terminus. The chain is Transferrin-binding protein A from Neisseria meningitidis serogroup B.